We begin with the raw amino-acid sequence, 216 residues long: Outer-membrane lipoprotein LolB (216 aa).

Residues 1–21 form the signal peptide; the sequence is MLIFKICFYRLLPLSVLLLAA. A lipid anchor (N-palmitoyl cysteine) is attached at Cys22. A lipid anchor (S-diacylglycerol cysteine) is attached at Cys22.

Belongs to the LolB family. In terms of assembly, monomer.

Its subcellular location is the cell outer membrane. Plays a critical role in the incorporation of lipoproteins in the outer membrane after they are released by the LolA protein. The polypeptide is Outer-membrane lipoprotein LolB (Hamiltonella defensa subsp. Acyrthosiphon pisum (strain 5AT)).